Here is a 241-residue protein sequence, read N- to C-terminus: DNA repair protein RecO (241 aa).

The protein belongs to the RecO family.

Functionally, involved in DNA repair and RecF pathway recombination. In Roseobacter denitrificans (strain ATCC 33942 / OCh 114) (Erythrobacter sp. (strain OCh 114)), this protein is DNA repair protein RecO.